Consider the following 327-residue polypeptide: WRKY transcription factor WRKY76 (327 aa).

Residues Ala-56–Val-76 adopt a coiled-coil conformation. Residues Arg-87–Glu-135 are disordered. The Nuclear localization signal signature appears at Lys-106–Ser-112. The span at Glu-114–His-126 shows a compositional bias: polar residues. Residues Asp-160–Pro-226 constitute a DNA-binding region (WRKY).

This sequence belongs to the WRKY group II-a family.

It localises to the nucleus. Transcription repressor. Interacts specifically with the W box (5'-(T)TGAC[CT]-3'), a frequently occurring elicitor-responsive cis-acting element. Regulates, probably indirectly, the activation of defense-related genes during defense response. Modulates plant innate immunity against X.oryzae pv. oryzae (Xoo). The sequence is that of WRKY transcription factor WRKY76 from Oryza sativa subsp. japonica (Rice).